We begin with the raw amino-acid sequence, 396 residues long: Tryptophan synthase beta chain (396 aa).

Residue Lys-88 is modified to N6-(pyridoxal phosphate)lysine.

This sequence belongs to the TrpB family. Tetramer of two alpha and two beta chains. Pyridoxal 5'-phosphate is required as a cofactor.

It carries out the reaction (1S,2R)-1-C-(indol-3-yl)glycerol 3-phosphate + L-serine = D-glyceraldehyde 3-phosphate + L-tryptophan + H2O. The protein operates within amino-acid biosynthesis; L-tryptophan biosynthesis; L-tryptophan from chorismate: step 5/5. Its function is as follows. The beta subunit is responsible for the synthesis of L-tryptophan from indole and L-serine. This chain is Tryptophan synthase beta chain, found in Shewanella baltica (strain OS185).